A 100-amino-acid polypeptide reads, in one-letter code: Urease subunit gamma (100 aa).

It belongs to the urease gamma subunit family. As to quaternary structure, heterotrimer of UreA (gamma), UreB (beta) and UreC (alpha) subunits. Three heterotrimers associate to form the active enzyme.

The protein localises to the cytoplasm. It carries out the reaction urea + 2 H2O + H(+) = hydrogencarbonate + 2 NH4(+). It participates in nitrogen metabolism; urea degradation; CO(2) and NH(3) from urea (urease route): step 1/1. The chain is Urease subunit gamma from Prochlorococcus marinus subsp. pastoris (strain CCMP1986 / NIES-2087 / MED4).